Reading from the N-terminus, the 414-residue chain is NADH-quinone oxidoreductase subunit D (414 aa).

This sequence belongs to the complex I 49 kDa subunit family. In terms of assembly, NDH-1 is composed of 14 different subunits. Subunits NuoB, C, D, E, F, and G constitute the peripheral sector of the complex.

It localises to the cell inner membrane. The enzyme catalyses a quinone + NADH + 5 H(+)(in) = a quinol + NAD(+) + 4 H(+)(out). NDH-1 shuttles electrons from NADH, via FMN and iron-sulfur (Fe-S) centers, to quinones in the respiratory chain. The immediate electron acceptor for the enzyme in this species is believed to be ubiquinone. Couples the redox reaction to proton translocation (for every two electrons transferred, four hydrogen ions are translocated across the cytoplasmic membrane), and thus conserves the redox energy in a proton gradient. The protein is NADH-quinone oxidoreductase subunit D of Akkermansia muciniphila (strain ATCC BAA-835 / DSM 22959 / JCM 33894 / BCRC 81048 / CCUG 64013 / CIP 107961 / Muc).